The primary structure comprises 436 residues: sn-glycerol-3-phosphate-binding periplasmic protein UgpB (436 aa).

The signal sequence occupies residues 1–26 (MTLKKLSYRLAAASALSFFVTSNAFA). The sn-glycerol 3-phosphate site is built by tyrosine 68, aspartate 92, serine 147, serine 274, glycine 308, tyrosine 347, and arginine 398.

Belongs to the bacterial solute-binding protein 1 family. The complex is composed of two ATP-binding proteins (UgpC), two transmembrane proteins (UgpA and UgpE) and a solute-binding protein (UgpB).

The protein localises to the periplasm. In terms of biological role, part of the ABC transporter complex UgpBAEC involved in sn-glycerol-3-phosphate (G3P) import. Binds G3P. The chain is sn-glycerol-3-phosphate-binding periplasmic protein UgpB (ugpB) from Agrobacterium fabrum (strain C58 / ATCC 33970) (Agrobacterium tumefaciens (strain C58)).